The chain runs to 423 residues: Sulfate adenylyltransferase (423 aa).

The sulfate site is built by glutamine 207 and arginine 209. Residues 207-210 (QLRN) and 301-304 (GRDH) each bind ATP. Active-site residues include arginine 209 and asparagine 210. Alanine 305 provides a ligand contact to sulfate.

Belongs to the sulfate adenylyltransferase family.

The protein localises to the mitosome. The enzyme catalyses sulfate + ATP + H(+) = adenosine 5'-phosphosulfate + diphosphate. It participates in sulfur metabolism; hydrogen sulfide biosynthesis; sulfite from sulfate: step 1/3. Functionally, catalyzes the first intracellular reaction of sulfate assimilation, forming adenosine-5'-phosphosulfate (APS) from inorganic sulfate and ATP. In Entamoeba histolytica (strain ATCC 30459 / HM-1:IMSS / ABRM), this protein is Sulfate adenylyltransferase.